The sequence spans 262 residues: Phosphatidylserine decarboxylase proenzyme (262 aa).

Catalysis depends on charge relay system; for autoendoproteolytic cleavage activity residues aspartate 86, histidine 142, and serine 226. Serine 226 acts as the Schiff-base intermediate with substrate; via pyruvic acid; for decarboxylase activity in catalysis. Serine 226 is subject to Pyruvic acid (Ser); by autocatalysis.

Belongs to the phosphatidylserine decarboxylase family. PSD-B subfamily. Prokaryotic type I sub-subfamily. In terms of assembly, heterodimer of a large membrane-associated beta subunit and a small pyruvoyl-containing alpha subunit. The cofactor is pyruvate. Is synthesized initially as an inactive proenzyme. Formation of the active enzyme involves a self-maturation process in which the active site pyruvoyl group is generated from an internal serine residue via an autocatalytic post-translational modification. Two non-identical subunits are generated from the proenzyme in this reaction, and the pyruvate is formed at the N-terminus of the alpha chain, which is derived from the carboxyl end of the proenzyme. The autoendoproteolytic cleavage occurs by a canonical serine protease mechanism, in which the side chain hydroxyl group of the serine supplies its oxygen atom to form the C-terminus of the beta chain, while the remainder of the serine residue undergoes an oxidative deamination to produce ammonia and the pyruvoyl prosthetic group on the alpha chain. During this reaction, the Ser that is part of the protease active site of the proenzyme becomes the pyruvoyl prosthetic group, which constitutes an essential element of the active site of the mature decarboxylase.

Its subcellular location is the cell membrane. It carries out the reaction a 1,2-diacyl-sn-glycero-3-phospho-L-serine + H(+) = a 1,2-diacyl-sn-glycero-3-phosphoethanolamine + CO2. The protein operates within phospholipid metabolism; phosphatidylethanolamine biosynthesis; phosphatidylethanolamine from CDP-diacylglycerol: step 2/2. Catalyzes the formation of phosphatidylethanolamine (PtdEtn) from phosphatidylserine (PtdSer). The polypeptide is Phosphatidylserine decarboxylase proenzyme (Bacillus cereus (strain ATCC 10987 / NRS 248)).